The following is a 353-amino-acid chain: MLLWYTTASIMRYLMVFMLFGIQCAAAIIYRGNYISLYVNSSATSIFLKGNNNDASIRGRFLFIGDQFPVTNTYNVTVELLHVNQTTLCLQPLYRVMYGECPRIRTGAIIACRVKRSWHYENATQLTDPNVEIIFKMNNTKVEDAGIYLLVVQLDYTSLFDIFFVSLNVYPKQDTSNEDVNYFPPVYSPSHILNTFKICHKFPVHNGMEQSILQHIVTSDVDTETENLSWQKDDLGSTQKPRKNFNPDVKVNVTHETRKTLMESSADVFMIAVPITASLLVILAIIIVVTVGIYRRRSSEKRKIYRPKRTKEQASTEKRERSESDVLLEAAVARLETIQEENPPHSVINPFTK.

The first 20 residues, 1–20 (MLLWYTTASIMRYLMVFMLF), serve as a signal peptide directing secretion. Residues 21 to 274 (GIQCAAAIIY…SADVFMIAVP (254 aa)) are Virion surface-facing. Residues N40, N75, N84, N122, N138, N227, and N252 are each glycosylated (N-linked (GlcNAc...) asparagine; by host). The helical transmembrane segment at 275-293 (ITASLLVILAIIIVVTVGI) threads the bilayer. Over 294–353 (YRRRSSEKRKIYRPKRTKEQASTEKRERSESDVLLEAAVARLETIQEENPPHSVINPFTK) the chain is Intravirion. A disordered region spans residues 303 to 324 (KIYRPKRTKEQASTEKRERSES). The segment covering 310–324 (TKEQASTEKRERSES) has biased composition (basic and acidic residues).

Belongs to the alphaherpesvirinae glycoprotein I family. In terms of assembly, interacts with gE.

The protein localises to the virion membrane. It localises to the host cell membrane. The protein resides in the host cell junction. It is found in the host Golgi apparatus membrane. Functionally, in epithelial cells, the heterodimer gE/gI is required for the cell-to-cell spread of the virus, by sorting nascent virions to cell junctions. Once the virus reaches the cell junctions, virus particles can spread to adjacent cells extremely rapidly through interactions with cellular receptors that accumulate at these junctions. Implicated in basolateral spread in polarized cells. In neuronal cells, gE/gI is essential for the anterograde spread of the infection throughout the host nervous system. Together with US9, the heterodimer gE/gI is involved in the sorting and transport of viral structural components toward axon tips. This chain is Envelope glycoprotein I (gI), found in Chlorocebus aethiops (Green monkey).